A 586-amino-acid polypeptide reads, in one-letter code: Laccase-9 (586 aa).

An N-terminal signal peptide occupies residues 1 to 25 (MPRVHHSLSNQAFLVLLLFSSIASA). Plastocyanin-like domains follow at residues 33 to 149 (HVKD…PRSG) and 159 to 307 (KEVP…YEGA). Asn52, Asn74, and Asn79 each carry an N-linked (GlcNAc...) asparagine glycan. Cu cation contacts are provided by His83 and His85. N-linked (GlcNAc...) asparagine glycosylation occurs at Asn111. His128 and His130 together coordinate Cu cation. Asn236, Asn333, Asn385, Asn403, and Asn451 each carry an N-linked (GlcNAc...) asparagine glycan. Residues 411–552 (DFPDQPPLKF…MMAFIVQNGP (142 aa)) enclose the Plastocyanin-like 3 domain. Cu cation is bound by residues His469, His472, His474, His531, Cys532, His533, and His537.

Belongs to the multicopper oxidase family. The cofactor is Cu cation. In terms of tissue distribution, predominantly expressed in roots.

The protein localises to the secreted. The protein resides in the extracellular space. It is found in the apoplast. The enzyme catalyses 4 hydroquinone + O2 = 4 benzosemiquinone + 2 H2O. Its function is as follows. Lignin degradation and detoxification of lignin-derived products. The polypeptide is Laccase-9 (LAC9) (Arabidopsis thaliana (Mouse-ear cress)).